Here is a 334-residue protein sequence, read N- to C-terminus: Syntaxin-18 (334 aa).

Topologically, residues 1-308 are cytoplasmic; that stretch reads MAVDITLLFR…EDIREAIKNN (308 aa). Disordered regions lie at residues 29-50 and 166-225; these read GGADGSRDELFRRSPRPKGDFS and LSKL…GEDE. 3 stretches are compositionally biased toward basic and acidic residues: residues 33–50, 166–186, and 193–207; these read GSRDELFRRSPRPKGDFS, LSKLEPEPHTKRKEPASEKSS, and SEEKPAAEDLPEKPL. The 63-residue stretch at 242–304 folds into the t-SNARE coiled-coil homology domain; that stretch reads IGEMNSLFDE…KEGNEDIREA (63 aa). A helical; Anchor for type IV membrane protein transmembrane segment spans residues 309 to 329; the sequence is AGFRVWILFFLVMCSFSLLFL. The Vesicular segment spans residues 330–334; sequence DWYDS.

It belongs to the syntaxin family. As to quaternary structure, component of a SNARE complex consisting of STX18, USE1L, BNIP1/SEC20L, and SEC22B. RINT1/TIP20L and ZW10 are associated with the complex through interaction with BNIP1/SEC20L. Interacts directly with USE1L and BNIP1/SEC20L.

Its subcellular location is the endoplasmic reticulum membrane. It localises to the golgi apparatus membrane. Its function is as follows. Syntaxin that may be involved in targeting and fusion of Golgi-derived retrograde transport vesicles with the ER. The polypeptide is Syntaxin-18 (Stx18) (Rattus norvegicus (Rat)).